A 341-amino-acid polypeptide reads, in one-letter code: MSDSETEETTKQSTEPVDNAWSLKIPTFKAEDNPHGMVEESSFATLFPKYREKYLKEVWPLVQQTVAEHHLRAELDLIEGSMVVKTTRKTWDPYIIIKSRDMIKLMARSVPFEQAKRVLQDETGCDIIKIGNLVHKKEKFVKRRQRLIGPNGATLKSIELLTDCYVLVQGNTVAALGPYKGLQQVRDIVLETMNNVHPIYNIKALMIKRELMKDPQLANEDWSRFLPKFKNKNISKRKQPKSRKPKGEYTPFPPAQPESKIDKQLASGEYFLNKEQKQAKRQQERVAKQAEAAKKQDERRNKDFMPPTEDSPEQNRKRPSEASKVDVKALKAKLLKANKQK.

Positions 126–194 (DIIKIGNLVH…VRDIVLETMN (69 aa)) constitute a KH domain. Positions 230–244 (KNKNISKRKQPKSRK) are enriched in basic residues. The interval 230 to 327 (KNKNISKRKQ…RPSEASKVDV (98 aa)) is disordered. A coiled-coil region spans residues 271-341 (FLNKEQKQAK…AKLLKANKQK (71 aa)). Composition is skewed to basic and acidic residues over residues 272–303 (LNKE…RNKD) and 313–327 (EQNR…KVDV).

It belongs to the KRR1 family. As to quaternary structure, monomer. Component of the ribosomal small subunit (SSU) processome.

It localises to the nucleus. The protein localises to the nucleolus. Required for 40S ribosome biogenesis. Involved in nucleolar processing of pre-18S ribosomal RNA and ribosome assembly. Binds to RNA. Required for female germline development, cell viability during eye development and for survival of dividing cells and epithelial cells during early wing disk development. This Drosophila grimshawi (Hawaiian fruit fly) protein is KRR1 small subunit processome component homolog.